A 340-amino-acid polypeptide reads, in one-letter code: DNA-directed RNA polymerase subunit alpha (340 aa).

The segment at 1 to 233 is alpha N-terminal domain (alpha-NTD); it reads MIQDEIPIPV…DLFIIFLNME (233 aa). The alpha C-terminal domain (alpha-CTD) stretch occupies residues 264-340; it reads AKEVAFKQIF…QLPKDQFNIS (77 aa).

This sequence belongs to the RNA polymerase alpha chain family. In plastids the minimal PEP RNA polymerase catalytic core is composed of four subunits: alpha, beta, beta', and beta''. When a (nuclear-encoded) sigma factor is associated with the core the holoenzyme is formed, which can initiate transcription.

It localises to the plastid. It is found in the chloroplast. It catalyses the reaction RNA(n) + a ribonucleoside 5'-triphosphate = RNA(n+1) + diphosphate. Its function is as follows. DNA-dependent RNA polymerase catalyzes the transcription of DNA into RNA using the four ribonucleoside triphosphates as substrates. This chain is DNA-directed RNA polymerase subunit alpha, found in Psilotum nudum (Whisk fern).